Reading from the N-terminus, the 255-residue chain is Hydroxyacylglutathione hydrolase (255 aa).

Positions 56, 58, 60, 61, 114, 133, and 171 each coordinate Zn(2+).

This sequence belongs to the metallo-beta-lactamase superfamily. Glyoxalase II family. In terms of assembly, monomer. Zn(2+) serves as cofactor.

The catalysed reaction is an S-(2-hydroxyacyl)glutathione + H2O = a 2-hydroxy carboxylate + glutathione + H(+). Its pathway is secondary metabolite metabolism; methylglyoxal degradation; (R)-lactate from methylglyoxal: step 2/2. In terms of biological role, thiolesterase that catalyzes the hydrolysis of S-D-lactoyl-glutathione to form glutathione and D-lactic acid. This Bradyrhizobium diazoefficiens (strain JCM 10833 / BCRC 13528 / IAM 13628 / NBRC 14792 / USDA 110) protein is Hydroxyacylglutathione hydrolase.